Here is a 350-residue protein sequence, read N- to C-terminus: Purine-binding protein BAB2_0673 (350 aa).

Residues 1–17 (MVIATVAGFMLGGAAHA) form the signal peptide. Trp-36, Trp-185, and Asp-211 together coordinate adenine.

This sequence belongs to the BMP lipoprotein family.

Functionally, binds adenine and probably also other purines, such as guanine. May play a role in adenine and guanine uptake. May be part of an ABC-type uptake system for adenine and similar ligands. The polypeptide is Purine-binding protein BAB2_0673 (Brucella abortus (strain 2308)).